A 420-amino-acid polypeptide reads, in one-letter code: Serine--tRNA ligase (420 aa).

229–231 (TAE) is an L-serine binding site. 260-262 (RAE) serves as a coordination point for ATP. L-serine is bound at residue glutamate 283. 347–350 (EISS) lines the ATP pocket. L-serine is bound at residue serine 382.

This sequence belongs to the class-II aminoacyl-tRNA synthetase family. Type-1 seryl-tRNA synthetase subfamily. Homodimer. The tRNA molecule binds across the dimer.

The protein localises to the cytoplasm. The catalysed reaction is tRNA(Ser) + L-serine + ATP = L-seryl-tRNA(Ser) + AMP + diphosphate + H(+). The enzyme catalyses tRNA(Sec) + L-serine + ATP = L-seryl-tRNA(Sec) + AMP + diphosphate + H(+). It participates in aminoacyl-tRNA biosynthesis; selenocysteinyl-tRNA(Sec) biosynthesis; L-seryl-tRNA(Sec) from L-serine and tRNA(Sec): step 1/1. In terms of biological role, catalyzes the attachment of serine to tRNA(Ser). Is also able to aminoacylate tRNA(Sec) with serine, to form the misacylated tRNA L-seryl-tRNA(Sec), which will be further converted into selenocysteinyl-tRNA(Sec). The sequence is that of Serine--tRNA ligase from Caldicellulosiruptor saccharolyticus (strain ATCC 43494 / DSM 8903 / Tp8T 6331).